We begin with the raw amino-acid sequence, 289 residues long: MSAPTMRSTSILTEHLGYPPISLVDDIINAVNEIMYKCTAAMEKYLLSKSKIGEEDYGEEIKSGVAKLESLLENSVDKNFDKLELYVLRNVLRIPEEYLDANVFRLENQKDLVIVDENELKKSEEKLREKVNDVELAFKKNEMLLKRVTKVKRLLFTIRGFKQKLNELLKCKDDVQLQKILESLKPIDDTMTLLTDSLRKLYVDSESTSSTEEVEALLQRLKTNGKQNNKDFRTRYIDIRTNNVLRKLGLLGDKEDEKQSAKPDARTQAGDIVSIDIEEPQLDLLDDVL.

Positions 105 to 147 form a coiled coil; sequence RLENQKDLVIVDENELKKSEEKLREKVNDVELAFKKNEMLLKR.

Belongs to the mis12 family. Component of the MIND kinetochore complex, which is composed of at least MTW1, NNF1, NSL1 and DSN1.

Its subcellular location is the chromosome. It localises to the centromere. It is found in the kinetochore. The protein localises to the cytoplasm. The protein resides in the cytoskeleton. Its subcellular location is the spindle pole. Its function is as follows. Acts as an essential component of the kinetochore MIND complex, which is required for the spindle checkpoint and kinetochore integrity. MIND plays a role in establishing a bipolar spindle-kinetochore interaction by joining kinetochore subunits contacting DNA to those contacting microtubules. This is Kinetochore-associated protein MTW1 (MTW1) from Saccharomyces cerevisiae (strain ATCC 204508 / S288c) (Baker's yeast).